A 432-amino-acid chain; its full sequence is N-acylneuraminate cytidylyltransferase (432 aa).

The residue at position 1 (Met1) is an N-acetylmethionine. The segment at 1–38 (MDALEKGAATSGPAPRGRPSRGRPPKLQRSRGAGRGLE) is disordered. Residues 15–31 (PRGRPSRGRPPKLQRSR) carry the BC1 motif motif. Residues 18–29 (RPSRGRPPKLQR) show a composition bias toward basic residues. 2 positions are modified to omega-N-methylarginine: Arg35 and Arg50. Substrate contacts are provided by Arg50, Asn60, Arg109, Ser118, Ser120, and Gln141. Positions 198-204 (KRPRRQD) match the BC2 motif motif. Residue Arg199 is part of the active site. Residues 267-274 (KEKLKEIK) carry the BC3 motif motif.

The protein belongs to the CMP-NeuNAc synthase family. As to quaternary structure, homotetramer; the active enzyme is formed by a dimer of dimers. As to expression, liver.

Its subcellular location is the nucleus. The catalysed reaction is an N-acylneuraminate + CTP = a CMP-N-acyl-beta-neuraminate + diphosphate. It functions in the pathway amino-sugar metabolism; N-acetylneuraminate metabolism. Functionally, catalyzes the activation of N-acetylneuraminic acid (NeuNAc) to cytidine 5'-monophosphate N-acetylneuraminic acid (CMP-NeuNAc), a substrate required for the addition of sialic acid. Has some activity toward NeuNAc, N-glycolylneuraminic acid (Neu5Gc) or 2-keto-3-deoxy-D-glycero-D-galacto-nononic acid (KDN). The polypeptide is N-acylneuraminate cytidylyltransferase (Cmas) (Rattus norvegicus (Rat)).